A 553-amino-acid chain; its full sequence is Phospholipase-B 81 (553 aa).

A signal peptide spans 1-35; sequence MVRFGSAASSDNRRRRCWSWYWGGLLLLWAVAETR. N-linked (GlcNAc...) asparagine glycans are attached at residues N69, N313, N416, and N531.

This sequence belongs to the phospholipase B-like family. In terms of tissue distribution, expressed by the venom gland.

It is found in the secreted. Its function is as follows. May cause hemolysis. This chain is Phospholipase-B 81, found in Drysdalia coronoides (White-lipped snake).